The primary structure comprises 161 residues: Probable chemoreceptor glutamine deamidase CheD (161 aa).

It belongs to the CheD family.

It catalyses the reaction L-glutaminyl-[protein] + H2O = L-glutamyl-[protein] + NH4(+). In terms of biological role, probably deamidates glutamine residues to glutamate on methyl-accepting chemotaxis receptors (MCPs), playing an important role in chemotaxis. The protein is Probable chemoreceptor glutamine deamidase CheD of Lachnoclostridium phytofermentans (strain ATCC 700394 / DSM 18823 / ISDg) (Clostridium phytofermentans).